Reading from the N-terminus, the 508-residue chain is Hydroxymethylglutaryl-CoA synthase, mitochondrial (508 aa).

Residues 1 to 37 (MQRLLTPVRQVLRVKRAMQEASFMPPLLPPAAHQRFS) constitute a mitochondrion transit peptide. Lys-52 carries the post-translational modification N6-succinyllysine. (3S)-3-hydroxy-3-methylglutaryl-CoA is bound by residues Glu-80 and Ala-81. The Proton donor/acceptor role is filled by Glu-132. (3S)-3-hydroxy-3-methylglutaryl-CoA is bound by residues Cys-166, Asn-204, and Thr-208. Cys-166 (acyl-thioester intermediate) is an active-site residue. Lys-243 is subject to N6-acetyllysine. At Lys-256 the chain carries N6-acetyllysine; alternate. At Lys-256 the chain carries N6-succinyllysine; alternate. (3S)-3-hydroxy-3-methylglutaryl-CoA contacts are provided by Ser-258 and His-301. The active-site Proton donor/acceptor is the His-301. Position 306 is an N6-acetyllysine (Lys-306). Lys-310 is a (3S)-3-hydroxy-3-methylglutaryl-CoA binding site. Lys-310 is modified (N6-acetyllysine; alternate). Lys-310 carries the N6-succinyllysine; alternate modification. Lys-333 carries the N6-succinyllysine modification. Residues Lys-342, Lys-350, Lys-354, and Lys-358 each carry the N6-acetyllysine; alternate modification. Residues Lys-342, Lys-350, Lys-354, and Lys-358 each carry the N6-succinyllysine; alternate modification. Asn-380 and Ser-414 together coordinate (3S)-3-hydroxy-3-methylglutaryl-CoA. Position 433 is a phosphoserine (Ser-433). An N6-acetyllysine modification is found at Lys-437. A phosphoserine mark is found at Ser-440 and Ser-456. The residue at position 473 (Lys-473) is an N6-acetyllysine; alternate. The residue at position 473 (Lys-473) is an N6-succinyllysine; alternate.

It belongs to the thiolase-like superfamily. HMG-CoA synthase family. In terms of assembly, homodimer. Succinylated. Desuccinylated by SIRT5. Succinylation, at least at Lys-310, inhibits the enzymatic activity.

The protein localises to the mitochondrion. The enzyme catalyses acetoacetyl-CoA + acetyl-CoA + H2O = (3S)-3-hydroxy-3-methylglutaryl-CoA + CoA + H(+). The protein operates within metabolic intermediate biosynthesis; (R)-mevalonate biosynthesis; (R)-mevalonate from acetyl-CoA: step 2/3. Its function is as follows. Catalyzes the first irreversible step in ketogenesis, condensing acetyl-CoA to acetoacetyl-CoA to form HMG-CoA, which is converted by HMG-CoA reductase (HMGCR) into mevalonate. The polypeptide is Hydroxymethylglutaryl-CoA synthase, mitochondrial (HMGCS2) (Sus scrofa (Pig)).